The primary structure comprises 391 residues: Multidrug resistance protein MdtL (391 aa).

Over 1-3 the chain is Cytoplasmic; it reads MSR. Residues 4-24 form a helical membrane-spanning segment; the sequence is FLICSFALVLLYPAGIDMYLV. The Periplasmic segment spans residues 25–41; it reads GLPRIAADLNASEAQLH. The helical transmembrane segment at 42 to 62 threads the bilayer; the sequence is IAFSVYLAGMAAAMLFAGKVA. Residues 63–68 lie on the Cytoplasmic side of the membrane; sequence DRSGRK. The chain crosses the membrane as a helical span at residues 69-89; it reads PVAIPGAALFIIASVFCSLAE. The Periplasmic segment spans residues 90–92; that stretch reads TST. A helical transmembrane segment spans residues 93-113; the sequence is LFLAGRFLQGLGAGCCYVVAF. Over 114–130 the chain is Cytoplasmic; sequence AILRDTLDDRRRAKVLS. Residues 131 to 151 form a helical membrane-spanning segment; that stretch reads LLNGITCIIPVLAPVLGHLIM. Over 152–157 the chain is Periplasmic; it reads LKFPWQ. A helical transmembrane segment spans residues 158–178; sequence SLFWTMAIMGIAVLMLSLFIL. Over 179-198 the chain is Cytoplasmic; the sequence is KETRPAAPAASDKSRENSES. The helical transmembrane segment at 199–221 threads the bilayer; it reads LLNRFFLSRVVITTLSVSVILTF. Residues 222 to 244 are Periplasmic-facing; sequence VNTSPVLLMEIMGFERGEYATIM. The chain crosses the membrane as a helical span at residues 245–265; sequence ALTAGVSMTVSFSTPFALGIF. The Cytoplasmic portion of the chain corresponds to 266 to 268; it reads KPR. The helical transmembrane segment at 269–289 threads the bilayer; that stretch reads TLMITSQVLFLAAGITLAVSP. Residues 290–292 lie on the Periplasmic side of the membrane; that stretch reads SHA. A helical transmembrane segment spans residues 293–313; it reads ISLFGITLICAGFSVGFGVAM. Topologically, residues 314–330 are cytoplasmic; sequence SQALGPFSLRAGVASST. Residues 331–351 traverse the membrane as a helical segment; the sequence is LGIAQVCGSSLWIWLAAVVGI. Residues 352–355 are Periplasmic-facing; the sequence is GAWN. A helical transmembrane segment spans residues 356 to 376; that stretch reads MLIGILIACSIVSLLLIMFVA. The Cytoplasmic segment spans residues 377–391; it reads PGRPVAAHEEIHHHA.

Belongs to the major facilitator superfamily. DHA1 family. MdtL (TC 2.A.1.2.22) subfamily.

It is found in the cell inner membrane. This is Multidrug resistance protein MdtL from Shigella dysenteriae serotype 1 (strain Sd197).